A 345-amino-acid chain; its full sequence is MLMFDPVPVKQEAMDPVSVSYPSNYMESMKPNKYGVIYSTPLPEKFFQTPEGLSHGIQMEPVDLTVNKRSSPPSAGNSPSSLKFPSSHRRASPGLSMPSSSPPIKKYSPPSPGVQPFGVPLSMPPVMAAALSRHGIRSPGILPVIQPVVVQPVPFMYTSHLQQPLMVSLSEEMENSSSSMQVPVIESYEKPISQKKIKIEPGIEPQRTDYYPEEMSPPLMNSVSPPQALLQENHPSVIVQPGKRPLPVESPDTQRKRRIHRCDYDGCNKVYTKSSHLKAHRRTHTGEKPYKCTWEGCTWKFARSDELTRHFRKHTGIKPFQCPDCDRSFSRSDHLALHRKRHMLV.

The interval 1–74 (MLMFDPVPVK…TVNKRSSPPS (74 aa)) is repressor domain. Lysine 10 participates in a covalent cross-link: Glycyl lysine isopeptide (Lys-Gly) (interchain with G-Cter in SUMO). Residues 60–68 (EPVDLTVNK) carry the 9aaTAD; inactive motif. Positions 61 to 65 (PVDLT) match the CTBP-binding motif motif. The segment at 66–112 (VNKRSSPPSAGNSPSSLKFPSSHRRASPGLSMPSSSPPIKKYSPPSP) is disordered. Lysine 68 is covalently cross-linked (Glycyl lysine isopeptide (Lys-Gly) (interchain with G-Cter in SUMO2)). Composition is skewed to low complexity over residues 70–81 (SSPPSAGNSPSS) and 92–108 (SPGL…KKYS). Phosphoserine occurs at positions 71, 92, 101, 108, and 111. Residues lysine 196 and lysine 198 each participate in a glycyl lysine isopeptide (Lys-Gly) (interchain with G-Cter in SUMO2) cross-link. Residues serine 216, serine 224, and serine 250 each carry the phosphoserine modification. 3 C2H2-type zinc fingers span residues 260–284 (HRCD…RRTH), 290–314 (YKCT…FRKH), and 320–342 (FQCP…RKRH).

It belongs to the krueppel C2H2-type zinc-finger protein family. Monomer. In terms of processing, sumoylated with SUMO1. Sumoylation is enhanced by PIAS1, PIAS2alpha and PIAS2beta, and PIAS4, but not by Pc2. Enhances transcriptional repression, but has no effect on DNA binding. Sumoylation on Lys-198 is the major site.

The protein localises to the nucleus. Binds to the CACCC box of erythroid cell-expressed genes. May play a role in hematopoiesis. This chain is Krueppel-like factor 3 (KLF3), found in Homo sapiens (Human).